A 357-amino-acid chain; its full sequence is 3-isopropylmalate dehydrogenase (357 aa).

An NAD(+)-binding site is contributed by 76-89 (GPKWDDLPSEKRPE). Substrate contacts are provided by Arg96, Arg106, Arg135, and Asp224. Mg(2+) contacts are provided by Asp224, Asp248, and Asp252. Position 282 to 294 (282 to 294 (GSAPDIAGQDKAN)) interacts with NAD(+).

It belongs to the isocitrate and isopropylmalate dehydrogenases family. LeuB type 1 subfamily. Homodimer. Mg(2+) is required as a cofactor. Mn(2+) serves as cofactor.

It is found in the cytoplasm. It catalyses the reaction (2R,3S)-3-isopropylmalate + NAD(+) = 4-methyl-2-oxopentanoate + CO2 + NADH. The protein operates within amino-acid biosynthesis; L-leucine biosynthesis; L-leucine from 3-methyl-2-oxobutanoate: step 3/4. Its function is as follows. Catalyzes the oxidation of 3-carboxy-2-hydroxy-4-methylpentanoate (3-isopropylmalate) to 3-carboxy-4-methyl-2-oxopentanoate. The product decarboxylates to 4-methyl-2 oxopentanoate. This is 3-isopropylmalate dehydrogenase from Nitratidesulfovibrio vulgaris (strain ATCC 29579 / DSM 644 / CCUG 34227 / NCIMB 8303 / VKM B-1760 / Hildenborough) (Desulfovibrio vulgaris).